Reading from the N-terminus, the 188-residue chain is Peptidyl-tRNA hydrolase (188 aa).

Residue tyrosine 18 coordinates tRNA. Catalysis depends on histidine 23, which acts as the Proton acceptor. Tyrosine 67, asparagine 69, and asparagine 115 together coordinate tRNA.

Belongs to the PTH family. Monomer.

The protein localises to the cytoplasm. The catalysed reaction is an N-acyl-L-alpha-aminoacyl-tRNA + H2O = an N-acyl-L-amino acid + a tRNA + H(+). Functionally, hydrolyzes ribosome-free peptidyl-tRNAs (with 1 or more amino acids incorporated), which drop off the ribosome during protein synthesis, or as a result of ribosome stalling. Catalyzes the release of premature peptidyl moieties from peptidyl-tRNA molecules trapped in stalled 50S ribosomal subunits, and thus maintains levels of free tRNAs and 50S ribosomes. This is Peptidyl-tRNA hydrolase from Salinibacter ruber (strain DSM 13855 / M31).